A 190-amino-acid chain; its full sequence is UPF0301 protein DP2218 (190 aa).

It belongs to the UPF0301 (AlgH) family.

The protein is UPF0301 protein DP2218 of Desulfotalea psychrophila (strain LSv54 / DSM 12343).